The chain runs to 408 residues: LL-diaminopimelate aminotransferase (408 aa).

2 residues coordinate substrate: tyrosine 15 and glycine 42. Pyridoxal 5'-phosphate is bound by residues tyrosine 72, 108-109 (SK), tyrosine 132, asparagine 187, tyrosine 218, and 246-248 (SFS). Substrate-binding residues include lysine 109, tyrosine 132, and asparagine 187. Position 249 is an N6-(pyridoxal phosphate)lysine (lysine 249). Positions 257 and 292 each coordinate pyridoxal 5'-phosphate. Residues asparagine 292 and arginine 388 each coordinate substrate.

Belongs to the class-I pyridoxal-phosphate-dependent aminotransferase family. LL-diaminopimelate aminotransferase subfamily. Homodimer. Pyridoxal 5'-phosphate is required as a cofactor.

The catalysed reaction is (2S,6S)-2,6-diaminopimelate + 2-oxoglutarate = (S)-2,3,4,5-tetrahydrodipicolinate + L-glutamate + H2O + H(+). Its pathway is amino-acid biosynthesis; L-lysine biosynthesis via DAP pathway; LL-2,6-diaminopimelate from (S)-tetrahydrodipicolinate (aminotransferase route): step 1/1. Its function is as follows. Involved in the synthesis of meso-diaminopimelate (m-DAP or DL-DAP), required for both lysine and peptidoglycan biosynthesis. Catalyzes the direct conversion of tetrahydrodipicolinate to LL-diaminopimelate. This chain is LL-diaminopimelate aminotransferase, found in Prochlorococcus marinus (strain MIT 9211).